Reading from the N-terminus, the 124-residue chain is Large ribosomal subunit protein uL18 (124 aa).

It belongs to the universal ribosomal protein uL18 family. In terms of assembly, part of the 50S ribosomal subunit; part of the 5S rRNA/L5/L18/L25 subcomplex. Contacts the 5S and 23S rRNAs.

Functionally, this is one of the proteins that bind and probably mediate the attachment of the 5S RNA into the large ribosomal subunit, where it forms part of the central protuberance. This Orientia tsutsugamushi (strain Ikeda) (Rickettsia tsutsugamushi) protein is Large ribosomal subunit protein uL18.